The chain runs to 1132 residues: BTB/POZ domain-containing protein 7 (1132 aa).

Over residues Met-1–His-10 the composition is skewed to polar residues. The tract at residues Met-1–Gln-24 is disordered. Gly-2 carries the N-myristoyl glycine lipid modification. 2 consecutive BTB domains span residues Thr-142–Asp-211 and Tyr-247–Val-341. The 67-residue stretch at Tyr-413–Ile-479 folds into the BACK domain. Position 722 is a phosphoserine (Ser-722). 2 disordered regions span residues Leu-897–Arg-1019 and Gln-1035–Leu-1132. Over residues Arg-918–His-927 the composition is skewed to basic residues. Basic and acidic residues-rich tracts occupy residues Thr-928–Pro-939, Lys-1000–Arg-1019, Pro-1083–Asp-1093, and Thr-1105–Ser-1114. Ser-1012 carries the post-translational modification Phosphoserine.

The protein resides in the nucleus. Acts as a mediator of epithelial dynamics and organ branching by promoting cleft progression. Induced following accumulation of fibronectin in forming clefts, leading to local expression of the cell-scattering SNAIL2 and suppression of E-cadherin levels, thereby altering cell morphology and reducing cell-cell adhesion. This stimulates cell separation at the base of forming clefts by local, dynamic intercellular gap formation and promotes cleft progression. The sequence is that of BTB/POZ domain-containing protein 7 (BTBD7) from Homo sapiens (Human).